A 2316-amino-acid chain; its full sequence is Receptor-type tyrosine-protein phosphatase zeta (2316 aa).

The first 24 residues, 1 to 24 (MRILQSFLACVQLLCVCRLDWAYG), serve as a signal peptide directing secretion. Over 25–1637 (YYRQQRKLVE…LAEGLESEKK (1613 aa)) the chain is Extracellular. In terms of domain architecture, Alpha-carbonic anhydrase spans 36–300 (IGWSYTGALN…KFSRQVFSSY (265 aa)). 2 cysteine pairs are disulfide-bonded: cysteine 56/cysteine 240 and cysteine 133/cysteine 264. Asparagine 105, asparagine 134, asparagine 223, asparagine 232, asparagine 324, asparagine 381, and asparagine 497 each carry an N-linked (GlcNAc...) asparagine glycan. Residues 314–413 (EPENVQADPE…LIVDMPTEDA (100 aa)) enclose the Fibronectin type-III domain. Disordered stretches follow at residues 433 to 499 (YGKG…LNTS) and 518 to 537 (LPSQIGTNLPPHSVEGTSAS). Asparagine 552 is a glycosylation site (N-linked (GlcNAc...) asparagine). A phosphoserine mark is found at serine 572 and serine 576. Disordered regions lie at residues 586–624 (KLDSGADDSSGSSPASSTVPFSTDNLSHGYTSSSDTPEA) and 636–720 (RNAL…EMPH). The span at 592–602 (DDSSGSSPASS) shows a compositional bias: low complexity. An O-linked (Xyl...) (chondroitin sulfate) serine glycan is attached at serine 595. A compositionally biased stretch (polar residues) spans 603–621 (TVPFSTDNLSHGYTSSSDT). Asparagine 610 carries an N-linked (GlcNAc...) asparagine glycan. Serine 645 is subject to Phosphoserine; alternate. Serine 645 carries an O-linked (Xyl...) (chondroitin sulfate) serine; alternate glycan. At serine 647 the chain carries Phosphoserine. Residues 666-675 (TDLTTQSETG) are compositionally biased toward polar residues. The N-linked (GlcNAc...) asparagine glycan is linked to asparagine 685. Residues 699-711 (ETFSPDATASRGP) are compositionally biased toward polar residues. N-linked (GlcNAc...) asparagine glycosylation is present at asparagine 786. O-linked (Xyl...) (chondroitin sulfate) serine glycosylation occurs at serine 1005. Asparagine 1025 and asparagine 1058 each carry an N-linked (GlcNAc...) asparagine glycan. 4 disordered regions span residues 1141 to 1172 (QASGDTWLKPGLSTNSEPALSDTASSEVSHPS), 1204 to 1228 (KTALPSGPRDPVLTETPMVEQSSSS), 1401 to 1521 (LLPS…DGRE), and 1545 to 1622 (TSDE…NSSH). Polar residues predominate over residues 1152-1172 (LSTNSEPALSDTASSEVSHPS). Over residues 1401-1413 (LLPSKATSKPTHS) the composition is skewed to polar residues. Acidic residues predominate over residues 1425-1439 (EDGDDYDDDDYDDID). A glycan (N-linked (GlcNAc...) asparagine) is linked at asparagine 1463. Over residues 1464–1478 (DSDTQESSLVDQSDP) the composition is skewed to polar residues. Residues serine 1550 and serine 1552 are each glycosylated (O-linked (Xyl...) (chondroitin sulfate) serine). Polar residues-rich tracts occupy residues 1555 to 1569 (GTSDSLNDNETSTDF) and 1595 to 1609 (PRSSTPSVTSGHSGV). Asparagine 1563 is a glycosylation site (N-linked (GlcNAc...) asparagine). Residues 1610-1621 (SNSSEAEASNSS) show a composition bias toward low complexity. Asparagine 1611 and asparagine 1619 each carry an N-linked (GlcNAc...) asparagine glycan. A helical transmembrane segment spans residues 1638 to 1663 (AVIPLVIVSALTFICLVVLVGILIYW). Topologically, residues 1664-2316 (RKCFQTAHFY…NIAESLESLV (653 aa)) are cytoplasmic. 2 positions are modified to phosphothreonine: threonine 1685 and threonine 1688. 2 Tyrosine-protein phosphatase domains span residues 1718-1993 (FTEE…LVEA) and 2024-2283 (LEKQ…VLSL). Residues aspartate 1902, 1934–1940 (CSAGVGR), and glutamine 1978 each bind substrate. Cysteine 1934 serves as the catalytic Phosphocysteine intermediate. At serine 2056 the chain carries Phosphoserine.

This sequence belongs to the protein-tyrosine phosphatase family. Receptor class 5 subfamily. In terms of assembly, interacts with tenascin. Interacts with N-CAM and NG-CAM. The carbonic-anhydrase like domain interacts with CNTN1 (contactin). Interacts with PTN. Interaction with PTN promotes formation of homooligomers; oligomerization impairs phosphatase activity. Interacts (via chondroitin sulfate chains) with MDK (via C-terminal); this interaction is inhibited by PTN; this interaction promotes neuronal migration. Nervous tissue specific.

It is found in the cell membrane. Its subcellular location is the secreted. The catalysed reaction is O-phospho-L-tyrosyl-[protein] + H2O = L-tyrosyl-[protein] + phosphate. In terms of biological role, protein tyrosine phosphatase that negatively regulates oligodendrocyte precursor proliferation in the embryonic spinal cord. Required for normal differentiation of the precursor cells into mature, fully myelinating oligodendrocytes. May play a role in protecting oligondendrocytes against apoptosis. May play a role in the establishment of contextual memory, probably via the dephosphorylation of proteins that are part of important signaling cascades. Its function is as follows. Isoform 3 (phosphacan), previously designated 3F8 chondroitin sulfate proteoglycan or 3H1 keratan sulfate proteoglycan depending on the glycosylation status, is a soluble nervous tissue-specific proteoglycan. It is synthesized by glia and binds to neurons and to the neural cell adhesion molecules tenascin, N-CAM or NG-CAM but not to laminin and fibronectin. Phosphacan acts as a potent inhibitor of cell adhesion and neurite outgrowth. The protein is Receptor-type tyrosine-protein phosphatase zeta (Ptprz1) of Rattus norvegicus (Rat).